A 385-amino-acid polypeptide reads, in one-letter code: Leucine aminopeptidase 1 (385 aa).

The N-terminal stretch at 1–20 (MKFPSLLSLGVAASTTIVAA) is a signal peptide. A propeptide spanning residues 21-87 (VPDQKPIGDI…FPKTFAQTTV (67 aa)) is cleaved from the precursor. The N-linked (GlcNAc...) asparagine glycan is linked to Asn177. 4 residues coordinate Zn(2+): His185, Asp204, Glu243, and Asp270. Residues Cys319 and Cys323 are joined by a disulfide bond. Residue His352 participates in Zn(2+) binding.

It belongs to the peptidase M28 family. M28E subfamily. In terms of assembly, monomer. Zn(2+) is required as a cofactor.

It localises to the secreted. Functionally, extracellular aminopeptidase that allows assimilation of proteinaceous substrates. The chain is Leucine aminopeptidase 1 (LAP1) from Ajellomyces capsulatus (strain G186AR / H82 / ATCC MYA-2454 / RMSCC 2432) (Darling's disease fungus).